The following is a 425-amino-acid chain: Serine--tRNA ligase (425 aa).

An L-serine-binding site is contributed by 227–229 (TAE). ATP is bound by residues 258–260 (RRE) and Val-274. Glu-281 contacts L-serine. 347–350 (ETHS) lines the ATP pocket. Thr-382 is a binding site for L-serine.

It belongs to the class-II aminoacyl-tRNA synthetase family. Type-1 seryl-tRNA synthetase subfamily. In terms of assembly, homodimer. The tRNA molecule binds across the dimer.

The protein localises to the cytoplasm. It catalyses the reaction tRNA(Ser) + L-serine + ATP = L-seryl-tRNA(Ser) + AMP + diphosphate + H(+). The catalysed reaction is tRNA(Sec) + L-serine + ATP = L-seryl-tRNA(Sec) + AMP + diphosphate + H(+). It participates in aminoacyl-tRNA biosynthesis; selenocysteinyl-tRNA(Sec) biosynthesis; L-seryl-tRNA(Sec) from L-serine and tRNA(Sec): step 1/1. Its function is as follows. Catalyzes the attachment of serine to tRNA(Ser). Is also able to aminoacylate tRNA(Sec) with serine, to form the misacylated tRNA L-seryl-tRNA(Sec), which will be further converted into selenocysteinyl-tRNA(Sec). This chain is Serine--tRNA ligase, found in Deinococcus radiodurans (strain ATCC 13939 / DSM 20539 / JCM 16871 / CCUG 27074 / LMG 4051 / NBRC 15346 / NCIMB 9279 / VKM B-1422 / R1).